Reading from the N-terminus, the 1313-residue chain is Inactive protein tyrosine kinase pTKL (1313 aa).

2 MORN repeats span residues 20 to 42 (YAGD…ENGN) and 45 to 63 (FGHF…IDKN). Residues asparagine 63, asparagine 131, asparagine 178, asparagine 208, asparagine 254, asparagine 260, and asparagine 288 are each glycosylated (N-linked (GlcNAc...) asparagine). Residues 300 to 365 (WNKEQVAQWL…LQLIKNLRVT (66 aa)) enclose the SAM domain. 5 N-linked (GlcNAc...) asparagine glycosylation sites follow: asparagine 466, asparagine 516, asparagine 525, asparagine 528, and asparagine 534. Basic and acidic residues predominate over residues 569-580 (EPIKPNKEKEEN). A disordered region spans residues 569–631 (EPIKPNKEKE…SEKSSETSSE (63 aa)). Positions 586–604 (PIINSKNETNLLNDSNPTK) are enriched in polar residues. N-linked (GlcNAc...) asparagine glycans are attached at residues asparagine 592, asparagine 598, asparagine 661, asparagine 678, asparagine 729, asparagine 735, and asparagine 749. Lysine 782 contacts ATP. N-linked (GlcNAc...) asparagine glycosylation is found at asparagine 790, asparagine 868, asparagine 940, asparagine 983, and asparagine 1000. The Protein kinase domain occupies 962–1294 (FRNKNNILCG…FDRILIEISM (333 aa)). Residues 1052–1055 (KILF) carry the RVxF motif motif. Residues asparagine 1191 and asparagine 1198 are each glycosylated (N-linked (GlcNAc...) asparagine).

It belongs to the protein kinase superfamily. TKL Ser/Thr protein kinase family.

The protein localises to the parasitophorous vacuole. It localises to the host cell membrane. Its subcellular location is the host cytoplasm. The protein resides in the host cytoskeleton. The sequence is that of Inactive protein tyrosine kinase pTKL from Plasmodium berghei (strain Anka).